The chain runs to 901 residues: Schlafen family member 11 (901 aa).

Mg(2+) contacts are provided by Glu209 and Glu214. Residue Lys216 is part of the active site. His285, Cys287, Cys321, and Cys322 together coordinate Zn(2+). 599–606 serves as a coordination point for ATP; it reads GLPGSGKT.

This sequence belongs to the Schlafen family. Subgroup III subfamily. Homodimer. Interacts with MCM3. Interacts with DHX9. Interacts with RPA1. It depends on Mg(2+) as a cofactor. Exhibits a wider expression range in ovarian and colon adenocarcinoma than in their corresponding healthy tissues.

The protein localises to the nucleus. It localises to the chromosome. Its function is as follows. Inhibitor of DNA replication that promotes cell death in response to DNA damage. Acts as a guardian of the genome by killing cells with defective replication. Persistently blocks stressed replication forks by opening chromatin across replication initiation sites at stressed replication forks, possibly leading to unwind DNA ahead of the MCM helicase and block fork progression, ultimately leading to cell death. Upon DNA damage, inhibits translation of ATR or ATM based on distinct codon usage without disrupting early DNA damage response signaling. Antiviral restriction factor with manganese-dependent type II tRNA endoribonuclease. A single tRNA molecule is bound and cleaved by the SLFN11 dimer. Specifically abrogates the production of retroviruses such as human immunodeficiency virus 1 (HIV-1) by acting as a specific inhibitor of the synthesis of retroviruses encoded proteins in a codon-usage-dependent manner. Impairs the replication of human cytomegalovirus (HCMV) and some Flaviviruses. Exploits the unique viral codon bias towards A/T nucleotides. Also acts as an interferon (IFN)-induced antiviral protein which acts as an inhibitor of retrovirus protein synthesis. In Homo sapiens (Human), this protein is Schlafen family member 11.